The sequence spans 416 residues: Putative competence-damage inducible protein (416 aa).

The protein belongs to the CinA family.

In Bacillus subtilis (strain 168), this protein is Putative competence-damage inducible protein.